The chain runs to 802 residues: Phenylalanine--tRNA ligase beta subunit (802 aa).

The tRNA-binding domain occupies 39-150 (AKALKPFTIA…ADAPIGAAYA (112 aa)). The 76-residue stretch at 400-475 (GDDRVIDFPV…RIYGVDKVPM (76 aa)) folds into the B5 domain. Aspartate 453, aspartate 459, glutamate 462, and glutamate 463 together coordinate Mg(2+). The FDX-ACB domain occupies 708 to 801 (SAFQPVSRDF…VTKKTGGTLR (94 aa)).

This sequence belongs to the phenylalanyl-tRNA synthetase beta subunit family. Type 1 subfamily. Tetramer of two alpha and two beta subunits. Mg(2+) serves as cofactor.

It is found in the cytoplasm. It catalyses the reaction tRNA(Phe) + L-phenylalanine + ATP = L-phenylalanyl-tRNA(Phe) + AMP + diphosphate + H(+). This chain is Phenylalanine--tRNA ligase beta subunit, found in Bradyrhizobium diazoefficiens (strain JCM 10833 / BCRC 13528 / IAM 13628 / NBRC 14792 / USDA 110).